The following is a 286-amino-acid chain: Probable tRNA(His) guanylyltransferase (286 aa).

Residues Asp29, Gly30, and Asp76 each contribute to the Mg(2+) site. GTP contacts are provided by residues 29–34 (DGKKFH) and 75–76 (SD).

The protein belongs to the tRNA(His) guanylyltransferase family. It depends on Mg(2+) as a cofactor.

It catalyses the reaction a 5'-end ribonucleotide-tRNA(His) + GTP + ATP + H2O = a 5'-end phospho-guanosine-ribonucleotide-tRNA(His) + AMP + 2 diphosphate + H(+). In terms of biological role, adds a GMP to the 5'-end of tRNA(His) after transcription and RNase P cleavage. This chain is Probable tRNA(His) guanylyltransferase, found in Drosophila melanogaster (Fruit fly).